We begin with the raw amino-acid sequence, 377 residues long: Dihydroorotate dehydrogenase (quinone) (377 aa).

FMN-binding positions include 82 to 86 and threonine 106; that span reads AGFDK. Lysine 86 contacts substrate. 131-135 contacts substrate; it reads NRMGF. 2 residues coordinate FMN: asparagine 159 and asparagine 192. Residue asparagine 192 participates in substrate binding. Serine 195 functions as the Nucleophile in the catalytic mechanism. Asparagine 197 provides a ligand contact to substrate. Residues lysine 228 and threonine 256 each coordinate FMN. A substrate-binding site is contributed by 257 to 258; sequence NT. FMN contacts are provided by residues glycine 282, glycine 311, and 332–333; that span reads YT.

It belongs to the dihydroorotate dehydrogenase family. Type 2 subfamily. In terms of assembly, monomer. The cofactor is FMN.

Its subcellular location is the cell membrane. It carries out the reaction (S)-dihydroorotate + a quinone = orotate + a quinol. It functions in the pathway pyrimidine metabolism; UMP biosynthesis via de novo pathway; orotate from (S)-dihydroorotate (quinone route): step 1/1. Catalyzes the conversion of dihydroorotate to orotate with quinone as electron acceptor. This Corynebacterium efficiens (strain DSM 44549 / YS-314 / AJ 12310 / JCM 11189 / NBRC 100395) protein is Dihydroorotate dehydrogenase (quinone).